The chain runs to 258 residues: Phosphate import ATP-binding protein PstB (258 aa).

Residues 13 to 253 (ITVENLNLWY…PREKSTEDYI (241 aa)) form the ABC transporter domain. 45–52 (GPSGCGKS) serves as a coordination point for ATP.

This sequence belongs to the ABC transporter superfamily. Phosphate importer (TC 3.A.1.7) family. In terms of assembly, the complex is composed of two ATP-binding proteins (PstB), two transmembrane proteins (PstC and PstA) and a solute-binding protein (PstS).

The protein resides in the cell membrane. The catalysed reaction is phosphate(out) + ATP + H2O = ADP + 2 phosphate(in) + H(+). Its function is as follows. Part of the ABC transporter complex PstSACB involved in phosphate import. Responsible for energy coupling to the transport system. This chain is Phosphate import ATP-binding protein PstB, found in Methanosarcina mazei (strain ATCC BAA-159 / DSM 3647 / Goe1 / Go1 / JCM 11833 / OCM 88) (Methanosarcina frisia).